Here is a 542-residue protein sequence, read N- to C-terminus: Chaperonin GroEL (542 aa).

Residues threonine 29 to proline 32, lysine 50, aspartate 86 to threonine 90, glycine 415, and aspartate 495 each bind ATP.

Belongs to the chaperonin (HSP60) family. In terms of assembly, forms a cylinder of 14 subunits composed of two heptameric rings stacked back-to-back. Interacts with the co-chaperonin GroES.

The protein resides in the cytoplasm. It carries out the reaction ATP + H2O + a folded polypeptide = ADP + phosphate + an unfolded polypeptide.. Functionally, together with its co-chaperonin GroES, plays an essential role in assisting protein folding. The GroEL-GroES system forms a nano-cage that allows encapsulation of the non-native substrate proteins and provides a physical environment optimized to promote and accelerate protein folding. The chain is Chaperonin GroEL from Flavobacterium psychrophilum (strain ATCC 49511 / DSM 21280 / CIP 103535 / JIP02/86).